Consider the following 155-residue polypeptide: Small ribosomal subunit protein uS7cz/uS7cy (155 aa).

It belongs to the universal ribosomal protein uS7 family. Part of the 30S ribosomal subunit.

The protein resides in the plastid. The protein localises to the chloroplast. Its function is as follows. One of the primary rRNA binding proteins, it binds directly to 16S rRNA where it nucleates assembly of the head domain of the 30S subunit. The sequence is that of Small ribosomal subunit protein uS7cz/uS7cy (rps7-A) from Crucihimalaya wallichii (Rock-cress).